We begin with the raw amino-acid sequence, 498 residues long: ATP synthase subunit beta, chloroplastic (498 aa).

172–179 (GGAGVGKT) is an ATP binding site.

It belongs to the ATPase alpha/beta chains family. F-type ATPases have 2 components, CF(1) - the catalytic core - and CF(0) - the membrane proton channel. CF(1) has five subunits: alpha(3), beta(3), gamma(1), delta(1), epsilon(1). CF(0) has four main subunits: a(1), b(1), b'(1) and c(9-12).

It is found in the plastid. The protein resides in the chloroplast thylakoid membrane. It catalyses the reaction ATP + H2O + 4 H(+)(in) = ADP + phosphate + 5 H(+)(out). Produces ATP from ADP in the presence of a proton gradient across the membrane. The catalytic sites are hosted primarily by the beta subunits. This is ATP synthase subunit beta, chloroplastic from Whiteheadia bifolia (Elephants ears).